The primary structure comprises 158 residues: Regulator of G-protein signaling 13 (158 aa).

The region spanning 34-150 is the RGS domain; that stretch reads SLESLMATKY…LKSEMYQQLL (117 aa).

Inhibits signal transduction by increasing the GTPase activity of G protein alpha subunits thereby driving them into their inactive GDP-bound form. Binds to both G(i)-alpha and G(q)-alpha. In Mus musculus (Mouse), this protein is Regulator of G-protein signaling 13 (Rgs13).